The sequence spans 331 residues: Beta-ketoacyl-[acyl-carrier-protein] synthase III (331 aa).

Active-site residues include Cys-113 and His-253. Residues 254–258 form an ACP-binding region; the sequence is QANTR. Asn-283 is an active-site residue.

This sequence belongs to the thiolase-like superfamily. FabH family. As to quaternary structure, homodimer.

It is found in the cytoplasm. The enzyme catalyses malonyl-[ACP] + acetyl-CoA + H(+) = 3-oxobutanoyl-[ACP] + CO2 + CoA. It functions in the pathway lipid metabolism; fatty acid biosynthesis. Catalyzes the condensation reaction of fatty acid synthesis by the addition to an acyl acceptor of two carbons from malonyl-ACP. Catalyzes the first condensation reaction which initiates fatty acid synthesis and may therefore play a role in governing the total rate of fatty acid production. Possesses both acetoacetyl-ACP synthase and acetyl transacylase activities. Its substrate specificity determines the biosynthesis of branched-chain and/or straight-chain of fatty acids. This is Beta-ketoacyl-[acyl-carrier-protein] synthase III from Desulfitobacterium hafniense (strain Y51).